A 419-amino-acid polypeptide reads, in one-letter code: Voltage-gated potassium channel subunit beta-1 (419 aa).

The tract at residues 1-51 is disordered; it reads MLAARTGAAGSQIAEESSKLRKQAAFSGGSKDRSPKKASENVKDSSLSPSG. The span at 30-43 shows a compositional bias: basic and acidic residues; that stretch reads SKDRSPKKASENVK. Positions 108, 109, 115, and 137 each coordinate NADP(+). Tyr-142 functions as the Proton donor/acceptor in the catalytic mechanism. The NADP(+) site is built by Asn-210, Ser-240, Arg-241, Gln-266, Trp-295, Ser-296, Pro-297, Leu-298, Ala-299, Cys-300, Lys-306, Arg-316, Gly-375, Ser-377, Gln-381, Glu-384, and Asn-385.

The protein belongs to the shaker potassium channel beta subunit family. In terms of assembly, homotetramer. Interaction with tetrameric potassium channel alpha subunits gives rise to a heterooctamer. Identified in potassium channel complexes containing KCNA1, KCNA2, KCNA4, KCNA5, KCNA6, KCNAB1 and KCNAB2. Part of a complex containing KCNA1, KCNA4 and LGI1; interaction with LGI1 inhibits down-regulation of KCNA1 channel activity. Interacts with the dimer formed by GNB1 and GNG2; this enhances KCNA1 binding. Interacts with SQSTM1. As to expression, detected in portal vein myocytes (at protein level).

The protein localises to the cytoplasm. The protein resides in the membrane. It localises to the cell membrane. It catalyses the reaction a primary alcohol + NADP(+) = an aldehyde + NADPH + H(+). The catalysed reaction is a secondary alcohol + NADP(+) = a ketone + NADPH + H(+). In terms of biological role, regulatory subunit of the voltage-gated potassium (Kv) channels composed of pore-forming and potassium-conducting alpha subunits and of regulatory beta subunits. The beta-1/KCNAB1 cytoplasmic subunit mediates closure of delayed rectifier potassium channels by physically obstructing the pore via its N-terminal domain and increases the speed of channel closure for other family members. Promotes the inactivation of KCNA1, KCNA2, KCNA4, KCNA5 and KCNA6 alpha subunit-containing channels. Displays nicotinamide adenine dinucleotide phosphate (NADPH)-dependent aldoketoreductase activity by catalyzing the NADPH-dependent reduction of a variety of endogenous aldehydes and ketones. The binding of NADPH is required for efficient down-regulation of potassium channel activity. Oxidation of the bound NADPH restrains N-terminal domain from blocking the channel, thereby decreasing N-type inactivation of potassium channel activity. The polypeptide is Voltage-gated potassium channel subunit beta-1 (KCNAB1) (Oryctolagus cuniculus (Rabbit)).